The following is a 143-amino-acid chain: Small ribosomal subunit protein bS6 (143 aa).

The disordered stretch occupies residues 100 to 143; the sequence is SPIIKMKDERREVVELTTSGSEDNQKDHHKEDLDKKTDEFSEEN. Basic and acidic residues-rich tracts occupy residues 104–113 and 122–143; these read KMKDERREVV and DNQK…SEEN.

It belongs to the bacterial ribosomal protein bS6 family.

In terms of biological role, binds together with bS18 to 16S ribosomal RNA. This chain is Small ribosomal subunit protein bS6, found in Hamiltonella defensa subsp. Acyrthosiphon pisum (strain 5AT).